Consider the following 610-residue polypeptide: tRNA uridine 5-carboxymethylaminomethyl modification enzyme MnmG (610 aa).

Gly-14–Gly-19 serves as a coordination point for FAD. Position 274–288 (Gly-274–Phe-288) interacts with NAD(+).

The protein belongs to the MnmG family. In terms of assembly, homodimer. Heterotetramer of two MnmE and two MnmG subunits. FAD is required as a cofactor.

The protein resides in the cytoplasm. In terms of biological role, NAD-binding protein involved in the addition of a carboxymethylaminomethyl (cmnm) group at the wobble position (U34) of certain tRNAs, forming tRNA-cmnm(5)s(2)U34. This Chlamydia trachomatis serovar L2b (strain UCH-1/proctitis) protein is tRNA uridine 5-carboxymethylaminomethyl modification enzyme MnmG.